The chain runs to 282 residues: Bifunctional protein FolD (282 aa).

NADP(+) is bound by residues 164 to 166 (GRS) and Ser189.

This sequence belongs to the tetrahydrofolate dehydrogenase/cyclohydrolase family. As to quaternary structure, homodimer.

The enzyme catalyses (6R)-5,10-methylene-5,6,7,8-tetrahydrofolate + NADP(+) = (6R)-5,10-methenyltetrahydrofolate + NADPH. The catalysed reaction is (6R)-5,10-methenyltetrahydrofolate + H2O = (6R)-10-formyltetrahydrofolate + H(+). The protein operates within one-carbon metabolism; tetrahydrofolate interconversion. Functionally, catalyzes the oxidation of 5,10-methylenetetrahydrofolate to 5,10-methenyltetrahydrofolate and then the hydrolysis of 5,10-methenyltetrahydrofolate to 10-formyltetrahydrofolate. This Lactobacillus helveticus (strain DPC 4571) protein is Bifunctional protein FolD.